The primary structure comprises 548 residues: Eukaryotic translation initiation factor 3 subunit D (548 aa).

Lys-53 is subject to N6-acetyllysine. Ser-161 is subject to Phosphoserine. The RNA gate stretch occupies residues 285 to 299 (DFDLLTVSETANEPP). A disordered region spans residues 523–548 (PDGTFSSDEDEEEEEEEEEEEEEEET). Phosphoserine occurs at positions 528 and 529. Positions 529–548 (SDEDEEEEEEEEEEEEEEET) are enriched in acidic residues.

It belongs to the eIF-3 subunit D family. Component of the eukaryotic translation initiation factor 3 (eIF-3) complex, which is composed of 13 subunits: EIF3A, EIF3B, EIF3C, EIF3D, EIF3E, EIF3F, EIF3G, EIF3H, EIF3I, EIF3J, EIF3K, EIF3L and EIF3M. The eIF-3 complex appears to include 3 stable modules: module A is composed of EIF3A, EIF3B, EIF3G and EIF3I; module B is composed of EIF3F, EIF3H, and EIF3M; and module C is composed of EIF3C, EIF3D, EIF3E, EIF3K and EIF3L. EIF3C of module C binds EIF3B of module A and EIF3H of module B, thereby linking the three modules. EIF3J is a labile subunit that binds to the eIF-3 complex via EIF3B. The eIF-3 complex interacts with RPS6KB1 under conditions of nutrient depletion. Mitogenic stimulation leads to binding and activation of a complex composed of MTOR and RPTOR, leading to phosphorylation and release of RPS6KB1 and binding of EIF4B to eIF-3.

The protein resides in the cytoplasm. MRNA cap-binding component of the eukaryotic translation initiation factor 3 (eIF-3) complex, a complex required for several steps in the initiation of protein synthesis of a specialized repertoire of mRNAs. The eIF-3 complex associates with the 40S ribosome and facilitates the recruitment of eIF-1, eIF-1A, eIF-2:GTP:methionyl-tRNAi and eIF-5 to form the 43S pre-initiation complex (43S PIC). The eIF-3 complex stimulates mRNA recruitment to the 43S PIC and scanning of the mRNA for AUG recognition. The eIF-3 complex is also required for disassembly and recycling of post-termination ribosomal complexes and subsequently prevents premature joining of the 40S and 60S ribosomal subunits prior to initiation. The eIF-3 complex specifically targets and initiates translation of a subset of mRNAs involved in cell proliferation, including cell cycling, differentiation and apoptosis, and uses different modes of RNA stem-loop binding to exert either translational activation or repression. In the eIF-3 complex, EIF3D specifically recognizes and binds the 7-methylguanosine cap of a subset of mRNAs. This Macaca fascicularis (Crab-eating macaque) protein is Eukaryotic translation initiation factor 3 subunit D.